Reading from the N-terminus, the 330-residue chain is MDPTTPAWGTESTTVNGNDQALLLLCGKETLIPVFLILFIALVGLVGNGFVLWLLGFRMRRNAFSVYVLSLAGADFLFLCFQIINCLVYLSNFFCSISINFPSFFTTVMTCAYLAGLSMLSTVSTERCLSVLWPIWYRCRRPRHLSAVVCVLLWALSLLLSILEGKFCGFLFSDGDSGWCQTFDFITAAWLIFLFMVLCGSSLALLVRILCGSRGLPLTRLYLTILLTVLVFLLCGLPFGIQWFLILWIWKDSDVLFCHIHPVSVVLSSLNSSANPIIYFFVGSFRKQWRLQQPILKLALQRALQDIAEVDHSEGCFRQGTPEMSRSSLV.

Residues 1–33 (MDPTTPAWGTESTTVNGNDQALLLLCGKETLIP) lie on the Extracellular side of the membrane. Residues 34–54 (VFLILFIALVGLVGNGFVLWL) form a helical membrane-spanning segment. Over 55–63 (LGFRMRRNA) the chain is Cytoplasmic. Residues 64–84 (FSVYVLSLAGADFLFLCFQII) traverse the membrane as a helical segment. The Extracellular segment spans residues 85–96 (NCLVYLSNFFCS). A helical transmembrane segment spans residues 97–117 (ISINFPSFFTTVMTCAYLAGL). Over 118 to 144 (SMLSTVSTERCLSVLWPIWYRCRRPRH) the chain is Cytoplasmic. A helical membrane pass occupies residues 145 to 165 (LSAVVCVLLWALSLLLSILEG). Topologically, residues 166–184 (KFCGFLFSDGDSGWCQTFD) are extracellular. A helical transmembrane segment spans residues 185–205 (FITAAWLIFLFMVLCGSSLAL). Residues 206–228 (LVRILCGSRGLPLTRLYLTILLT) are Cytoplasmic-facing. Residues 229–249 (VLVFLLCGLPFGIQWFLILWI) form a helical membrane-spanning segment. The Extracellular segment spans residues 250 to 264 (WKDSDVLFCHIHPVS). Residues 265-285 (VVLSSLNSSANPIIYFFVGSF) form a helical membrane-spanning segment. Residues 286-330 (RKQWRLQQPILKLALQRALQDIAEVDHSEGCFRQGTPEMSRSSLV) lie on the Cytoplasmic side of the membrane.

The protein belongs to the G-protein coupled receptor 1 family. Mas subfamily. In terms of tissue distribution, mainly expressed in mast cells. Has a limited expression profile, both peripheral and within the central nervous system, with highest levels in dorsal root ganglion. Detected in blood vessels, scattered lymphocytes, and gastrointestinal ganglia (at protein level).

Its subcellular location is the cell membrane. Its function is as follows. Mast cell-specific receptor for basic secretagogues, i.e. cationic amphiphilic drugs, as well as endo- or exogenous peptides, consisting of a basic head group and a hydrophobic core. Recognizes and binds small molecules containing a cyclized tetrahydroisoquinoline (THIQ), such as non-steroidal neuromuscular blocking drugs (NMBDs), including tubocurarine and atracurium. In response to these compounds, mediates pseudo-allergic reactions characterized by histamine release, inflammation and airway contraction. Acts as a receptor for a number of other ligands, including peptides and alkaloids, such as cortistatin-14, proadrenomedullin N-terminal peptides PAMP-12 and, at lower extent, PAMP-20, antibacterial protein LL-37, PMX-53 peptide, beta-defensins, and complanadine A. The sequence is that of Mas-related G-protein coupled receptor member X2 (MRGPRX2) from Homo sapiens (Human).